The primary structure comprises 137 residues: Glycine cleavage system H protein (137 aa).

Residues 36 to 118 (PAIIGITEYA…YGEGWLLKVE (83 aa)) enclose the Lipoyl-binding domain. N6-lipoyllysine is present on K77.

It belongs to the GcvH family. In terms of assembly, the glycine cleavage system is composed of four proteins: P, T, L and H. It depends on (R)-lipoate as a cofactor.

In terms of biological role, the glycine cleavage system catalyzes the degradation of glycine. The H protein shuttles the methylamine group of glycine from the P protein to the T protein. This is Glycine cleavage system H protein from Bifidobacterium longum (strain NCC 2705).